Consider the following 430-residue polypeptide: Enolase (430 aa).

Gln-167 contacts (2R)-2-phosphoglycerate. Glu-209 functions as the Proton donor in the catalytic mechanism. Mg(2+) contacts are provided by Asp-246, Glu-287, and Asp-314. (2R)-2-phosphoglycerate contacts are provided by Lys-339, Arg-368, Ser-369, and Lys-390. Lys-339 functions as the Proton acceptor in the catalytic mechanism.

Belongs to the enolase family. Requires Mg(2+) as cofactor.

The protein localises to the cytoplasm. It localises to the secreted. The protein resides in the cell surface. The catalysed reaction is (2R)-2-phosphoglycerate = phosphoenolpyruvate + H2O. Its pathway is carbohydrate degradation; glycolysis; pyruvate from D-glyceraldehyde 3-phosphate: step 4/5. Its function is as follows. Catalyzes the reversible conversion of 2-phosphoglycerate (2-PG) into phosphoenolpyruvate (PEP). It is essential for the degradation of carbohydrates via glycolysis. This is Enolase from Prochlorococcus marinus (strain MIT 9312).